The chain runs to 156 residues: Transcription antitermination protein NusB (156 aa).

This sequence belongs to the NusB family.

Involved in transcription antitermination. Required for transcription of ribosomal RNA (rRNA) genes. Binds specifically to the boxA antiterminator sequence of the ribosomal RNA (rrn) operons. This chain is Transcription antitermination protein NusB, found in Rickettsia bellii (strain OSU 85-389).